The sequence spans 280 residues: Large ribosomal subunit protein uL2 (280 aa).

Disordered regions lie at residues 27-58 (STPEKSLVRPLHGHGGRNAHGRITTRHKGGGH) and 226-280 (MNPV…KHGR). 2 stretches are compositionally biased toward basic residues: residues 37-58 (LHGHGGRNAHGRITTRHKGGGH) and 268-280 (IVRRRRTGKKHGR).

This sequence belongs to the universal ribosomal protein uL2 family. In terms of assembly, part of the 50S ribosomal subunit. Forms a bridge to the 30S subunit in the 70S ribosome.

One of the primary rRNA binding proteins. Required for association of the 30S and 50S subunits to form the 70S ribosome, for tRNA binding and peptide bond formation. It has been suggested to have peptidyltransferase activity; this is somewhat controversial. Makes several contacts with the 16S rRNA in the 70S ribosome. The sequence is that of Large ribosomal subunit protein uL2 from Mycobacterium marinum (strain ATCC BAA-535 / M).